The primary structure comprises 628 residues: Probable potassium transport system protein Kup 1 (628 aa).

12 helical membrane passes run 18-38 (ITLAALGVVYGDLGTSPLYAL), 58-78 (IVSLFFWTIMIVVSFKYVLLV), 106-126 (ALLMLLGLVGVGLFIGDAVIT), 141-161 (ITPELAPFVLPITLTVLVILF), 175-195 (FGPIMLLWFGVLAALGAYEIV), 219-239 (IAFITLGAVVLCVTGTEALYA), 253-273 (WGSLVMPALLLNYFGQGALLL), 285-305 (LLAPSWLAFPLLILATLATVI), 343-363 (IYLPLVNWLLLGGIIIVIIWF), 371-391 (AAYGIAVTGTMALTTLLLMVV), 401-421 (WLIALICAPLLLVDVTFFAAN), and 425-445 (FLAGGWLPILFALLAIIVMTT).

This sequence belongs to the HAK/KUP transporter (TC 2.A.72) family.

The protein resides in the cell inner membrane. It catalyses the reaction K(+)(in) + H(+)(in) = K(+)(out) + H(+)(out). Functionally, transport of potassium into the cell. Likely operates as a K(+):H(+) symporter. The protein is Probable potassium transport system protein Kup 1 of Aeromonas hydrophila subsp. hydrophila (strain ATCC 7966 / DSM 30187 / BCRC 13018 / CCUG 14551 / JCM 1027 / KCTC 2358 / NCIMB 9240 / NCTC 8049).